Reading from the N-terminus, the 116-residue chain is Small ribosomal subunit protein uS11m (116 aa).

This sequence belongs to the universal ribosomal protein uS11 family.

It is found in the mitochondrion. The sequence is that of Small ribosomal subunit protein uS11m (RPS11) from Chondrus crispus (Carrageen Irish moss).